Consider the following 171-residue polypeptide: Tetratricopeptide repeat protein 9C (171 aa).

TPR repeat units follow at residues 8 to 41 (AQVY…LRGL), 72 to 107 (THCY…QPDN), and 108 to 141 (AKAL…QPKD).

The protein belongs to the TTC9 family.

The sequence is that of Tetratricopeptide repeat protein 9C (Ttc9c) from Mus musculus (Mouse).